The following is a 475-amino-acid chain: Ribulose bisphosphate carboxylase large chain (475 aa).

The propeptide occupies 1–2 (MS). N-acetylproline is present on P3. Residue K14 is modified to N6,N6,N6-trimethyllysine. Residues N123 and T173 each contribute to the substrate site. The Proton acceptor role is filled by K175. A substrate-binding site is contributed by K177. Residues K201, D203, and E204 each contribute to the Mg(2+) site. An N6-carboxylysine modification is found at K201. H294 acts as the Proton acceptor in catalysis. Residues R295, H327, and S379 each contribute to the substrate site.

It belongs to the RuBisCO large chain family. Type I subfamily. As to quaternary structure, heterohexadecamer of 8 large chains and 8 small chains; disulfide-linked. The disulfide link is formed within the large subunit homodimers. The cofactor is Mg(2+). In terms of processing, the disulfide bond which can form in the large chain dimeric partners within the hexadecamer appears to be associated with oxidative stress and protein turnover.

Its subcellular location is the plastid. It localises to the chloroplast. The catalysed reaction is 2 (2R)-3-phosphoglycerate + 2 H(+) = D-ribulose 1,5-bisphosphate + CO2 + H2O. It carries out the reaction D-ribulose 1,5-bisphosphate + O2 = 2-phosphoglycolate + (2R)-3-phosphoglycerate + 2 H(+). Its function is as follows. RuBisCO catalyzes two reactions: the carboxylation of D-ribulose 1,5-bisphosphate, the primary event in carbon dioxide fixation, as well as the oxidative fragmentation of the pentose substrate in the photorespiration process. Both reactions occur simultaneously and in competition at the same active site. This Tsuga heterophylla (Western hemlock) protein is Ribulose bisphosphate carboxylase large chain.